A 379-amino-acid chain; its full sequence is Epoxyqueuosine reductase (379 aa).

Catalysis depends on Asp-139, which acts as the Proton donor. The 33-residue stretch at 181–213 (IPLPVDQPVEEGCGKCVACMTICPTGAIVEPYT) folds into the 4Fe-4S ferredoxin-type domain. [4Fe-4S] cluster is bound by residues Cys-193, Cys-196, Cys-199, Cys-203, Cys-219, Cys-246, Cys-249, and Cys-253.

It belongs to the QueG family. As to quaternary structure, monomer. Requires cob(II)alamin as cofactor. [4Fe-4S] cluster is required as a cofactor.

It is found in the cytoplasm. It catalyses the reaction epoxyqueuosine(34) in tRNA + AH2 = queuosine(34) in tRNA + A + H2O. The protein operates within tRNA modification; tRNA-queuosine biosynthesis. Functionally, catalyzes the conversion of epoxyqueuosine (oQ) to queuosine (Q), which is a hypermodified base found in the wobble positions of tRNA(Asp), tRNA(Asn), tRNA(His) and tRNA(Tyr). The chain is Epoxyqueuosine reductase from Escherichia coli (strain K12).